The sequence spans 306 residues: MATKNEEILRKPDWLKIKLNTNENYIGLKKMMREKNLHTVCEEAKCPNIHECWGARRTATFMILGAVCTRACRFCAVKTGLPNELDLNEPERVAESVELMNLKHVVITAVARDDLRDAGSNVYAETVRKVRERNPFTTIEILPSDMGGDYEALETLMASKPDILNHNIETVRRLTPRVRARATYERTLEFLRRSKELQPDIPTKSSLMVGLGETIEEIYETMDDLRANDVDILTIGQYLQPSRKHLKVEKYYTPLEFGKLRKVAMDKGFKHCEAGPMVRSSYHADEQVNEAAKEKHRLGEEKLQQN.

7 residues coordinate [4Fe-4S] cluster: Cys-41, Cys-46, Cys-52, Cys-68, Cys-72, Cys-75, and Ser-281. The Radical SAM core domain occupies 54 to 270 (GARRTATFMI…RKVAMDKGFK (217 aa)). Residues 283–306 (HADEQVNEAAKEKHRLGEEKLQQN) form a disordered region.

The protein belongs to the radical SAM superfamily. Lipoyl synthase family. [4Fe-4S] cluster serves as cofactor.

Its subcellular location is the cytoplasm. The enzyme catalyses [[Fe-S] cluster scaffold protein carrying a second [4Fe-4S](2+) cluster] + N(6)-octanoyl-L-lysyl-[protein] + 2 oxidized [2Fe-2S]-[ferredoxin] + 2 S-adenosyl-L-methionine + 4 H(+) = [[Fe-S] cluster scaffold protein] + N(6)-[(R)-dihydrolipoyl]-L-lysyl-[protein] + 4 Fe(3+) + 2 hydrogen sulfide + 2 5'-deoxyadenosine + 2 L-methionine + 2 reduced [2Fe-2S]-[ferredoxin]. It functions in the pathway protein modification; protein lipoylation via endogenous pathway; protein N(6)-(lipoyl)lysine from octanoyl-[acyl-carrier-protein]. Catalyzes the radical-mediated insertion of two sulfur atoms into the C-6 and C-8 positions of the octanoyl moiety bound to the lipoyl domains of lipoate-dependent enzymes, thereby converting the octanoylated domains into lipoylated derivatives. This chain is Lipoyl synthase, found in Staphylococcus haemolyticus (strain JCSC1435).